We begin with the raw amino-acid sequence, 104 residues long: Large ribosomal subunit protein uL23 (104 aa).

Belongs to the universal ribosomal protein uL23 family. Part of the 50S ribosomal subunit. Contacts protein L29, and trigger factor when it is bound to the ribosome.

In terms of biological role, one of the early assembly proteins it binds 23S rRNA. One of the proteins that surrounds the polypeptide exit tunnel on the outside of the ribosome. Forms the main docking site for trigger factor binding to the ribosome. The chain is Large ribosomal subunit protein uL23 from Trichormus variabilis (strain ATCC 29413 / PCC 7937) (Anabaena variabilis).